The chain runs to 252 residues: Mannose-P-dolichol utilization defect 1 protein homolog (252 aa).

In terms of domain architecture, PQ-loop 1 spans 34–100; sequence KALLSKGLGL…HGYPFSAWGD (67 aa). 7 consecutive transmembrane segments (helical) span residues 41 to 61, 69 to 89, 98 to 118, 126 to 146, 148 to 168, 180 to 200, and 207 to 227; these read LGLA…LKIL, INIV…SYNF, WGDS…VLFF, GLFL…LTPM, VLFT…LSQA, LSAA…FTSI, and MIIL…GQLI. Residues 157–211 form the PQ-loop 2 domain; the sequence is IPILLVGKLSQAYTNYQAGSTGQLSAATVIMMFAGSVARIFTSIQETGDFMIILT.

This sequence belongs to the MPDU1 (TC 2.A.43.3) family.

Its subcellular location is the membrane. This Drosophila melanogaster (Fruit fly) protein is Mannose-P-dolichol utilization defect 1 protein homolog.